Reading from the N-terminus, the 238-residue chain is tRNA (guanine-N(7)-)-methyltransferase (238 aa).

S-adenosyl-L-methionine contacts are provided by Glu-70, Asp-95, Asp-122, and Asp-145. Residue Asp-145 is part of the active site. Substrate contacts are provided by residues Lys-149, Asp-181, and 216 to 219 (TKFE).

Belongs to the class I-like SAM-binding methyltransferase superfamily. TrmB family.

It catalyses the reaction guanosine(46) in tRNA + S-adenosyl-L-methionine = N(7)-methylguanosine(46) in tRNA + S-adenosyl-L-homocysteine. It participates in tRNA modification; N(7)-methylguanine-tRNA biosynthesis. Functionally, catalyzes the formation of N(7)-methylguanine at position 46 (m7G46) in tRNA. The polypeptide is tRNA (guanine-N(7)-)-methyltransferase (Neisseria gonorrhoeae (strain ATCC 700825 / FA 1090)).